Consider the following 270-residue polypeptide: Protein MGF 110-1L (270 aa).

Positions M1–R26 are cleaved as a signal peptide. An A repeat occupies M1–I146. N75 carries N-linked (GlcNAc...) asparagine; by host glycosylation. A run of 2 helical transmembrane segments spans residues W118 to I138 and I146 to R166. A B repeat occupies V147–M270.

The protein belongs to the asfivirus MGF 110 family.

The protein localises to the membrane. In terms of biological role, plays a role in virus cell tropism, and may be required for efficient virus replication in macrophages. This is Protein MGF 110-1L from Ornithodoros (relapsing fever ticks).